A 260-amino-acid polypeptide reads, in one-letter code: Proteasome subunit alpha type-1 (260 aa).

Positions 231–260 are disordered; that stretch reads FLEGLEERPQRKPALPADEPAEKAEEPMEH. Positions 250 to 260 are enriched in basic and acidic residues; that stretch reads PAEKAEEPMEH.

Belongs to the peptidase T1A family. As to quaternary structure, the 26S proteasome consists of a 20S proteasome core and two 19S regulatory subunits. The 20S proteasome core is a barrel-shaped complex made of 28 subunits that are arranged in four stacked rings. The two outer rings are each formed by seven alpha subunits, and the two inner rings are formed by seven beta subunits. The proteolytic activity is exerted by three beta-subunits PSMB5, PSMB6 and PSMB7.

The protein localises to the cytoplasm. Its subcellular location is the nucleus. Functionally, component of the 20S core proteasome complex involved in the proteolytic degradation of most intracellular proteins. This complex plays numerous essential roles within the cell by associating with different regulatory particles. Associated with two 19S regulatory particles, forms the 26S proteasome and thus participates in the ATP-dependent degradation of ubiquitinated proteins. The 26S proteasome plays a key role in the maintenance of protein homeostasis by removing misfolded or damaged proteins that could impair cellular functions, and by removing proteins whose functions are no longer required. Associated with the PA200 or PA28, the 20S proteasome mediates ubiquitin-independent protein degradation. This type of proteolysis is required in several pathways including spermatogenesis (20S-PA200 complex) or generation of a subset of MHC class I-presented antigenic peptides (20S-PA28 complex). The protein is Proteasome subunit alpha type-1 (PSMA1) of Gallus gallus (Chicken).